Consider the following 426-residue polypeptide: Multifunctional protein ADE2 (426 aa).

Residues 1 to 261 (MAPAASELKL…WVAERVELLL (261 aa)) are SAICAR synthetase. Positions 262–426 (KTKSQGRVVV…ADKKLRECTL (165 aa)) are AIR carboxylase.

It in the N-terminal section; belongs to the SAICAR synthetase family. In the C-terminal section; belongs to the AIR carboxylase family. Class II subfamily. In terms of assembly, homooctamer.

It carries out the reaction 5-amino-1-(5-phospho-D-ribosyl)imidazole-4-carboxylate + L-aspartate + ATP = (2S)-2-[5-amino-1-(5-phospho-beta-D-ribosyl)imidazole-4-carboxamido]succinate + ADP + phosphate + 2 H(+). The enzyme catalyses 5-amino-1-(5-phospho-D-ribosyl)imidazole-4-carboxylate + H(+) = 5-amino-1-(5-phospho-beta-D-ribosyl)imidazole + CO2. Its pathway is purine metabolism; IMP biosynthesis via de novo pathway; 5-amino-1-(5-phospho-D-ribosyl)imidazole-4-carboxamide from 5-amino-1-(5-phospho-D-ribosyl)imidazole-4-carboxylate: step 1/2. The protein operates within purine metabolism; IMP biosynthesis via de novo pathway; 5-amino-1-(5-phospho-D-ribosyl)imidazole-4-carboxylate from 5-amino-1-(5-phospho-D-ribosyl)imidazole (carboxylase route): step 1/1. The protein is Multifunctional protein ADE2 (AIRC) of Gallus gallus (Chicken).